A 262-amino-acid polypeptide reads, in one-letter code: Carbonic anhydrase 13 (262 aa).

The Alpha-carbonic anhydrase domain maps to 4-261 (LSWGYREHNG…LKGRKVRASF (258 aa)). Catalysis depends on H65, which acts as the Proton donor/acceptor. Zn(2+)-binding residues include H95, H97, and H120. 200–201 (TV) is a substrate binding site.

This sequence belongs to the alpha-carbonic anhydrase family. The cofactor is Zn(2+). In terms of tissue distribution, expressed in thymus, small intestine, spleen, prostate, ovary, colon and testis.

The enzyme catalyses hydrogencarbonate + H(+) = CO2 + H2O. With respect to regulation, inhibited by acetazolamide. Reversible hydration of carbon dioxide. In Homo sapiens (Human), this protein is Carbonic anhydrase 13 (CA13).